Reading from the N-terminus, the 191-residue chain is Protein GrpE (191 aa).

It belongs to the GrpE family. Homodimer.

The protein localises to the cytoplasm. In terms of biological role, participates actively in the response to hyperosmotic and heat shock by preventing the aggregation of stress-denatured proteins, in association with DnaK and GrpE. It is the nucleotide exchange factor for DnaK and may function as a thermosensor. Unfolded proteins bind initially to DnaJ; upon interaction with the DnaJ-bound protein, DnaK hydrolyzes its bound ATP, resulting in the formation of a stable complex. GrpE releases ADP from DnaK; ATP binding to DnaK triggers the release of the substrate protein, thus completing the reaction cycle. Several rounds of ATP-dependent interactions between DnaJ, DnaK and GrpE are required for fully efficient folding. The chain is Protein GrpE from Listeria monocytogenes serotype 4b (strain CLIP80459).